Here is a 668-residue protein sequence, read N- to C-terminus: Potassium voltage-gated channel subfamily KQT member 1 (668 aa).

At Met1–Trp119 the chain is on the cytoplasmic side. Ser27 carries the phosphoserine; by PKA modification. The helical transmembrane segment at Lys120–Leu141 threads the bilayer. The Extracellular portion of the chain corresponds to Ser142–Thr152. A helical membrane pass occupies residues Gly153 to Trp175. Residues Ser176 to Arg191 lie on the Cytoplasmic side of the membrane. A helical membrane pass occupies residues Phe192–Lys217. Residues Gly218–Ala225 lie on the Extracellular side of the membrane. A helical; Voltage-sensor membrane pass occupies residues Ile226–Asp241. The tract at residues Met237–Gly245 is interaction with KCNE3. Over Arg242–Gln259 the chain is Cytoplasmic. An a 1,2-diacyl-sn-glycero-3-phospho-(1D-myo-inositol-4,5-bisphosphate)-binding site is contributed by Gln243. A helical transmembrane segment spans residues Glu260–Ala282. Residues Glu283–Tyr298 are Extracellular-facing. A glycan (N-linked (GlcNAc...) asparagine) is linked at Asn288. The pore-forming intramembrane region spans Ala299–Pro319. Residues Gln320 to Thr321 lie on the Extracellular side of the membrane. A helical transmembrane segment spans residues Trp322–Gly347. The Cytoplasmic segment spans residues Ser348–Ser668. The interval Ala369–Tyr381 is interaction with CALM. 2 positions are modified to phosphoserine: Ser406 and Ser408. Positions Lys514–Phe528 are interaction with CALM; calcium-dependent. The interaction with KCNE1 C-terminus stretch occupies residues Pro534–Leu571. Positions Ser584–Gln620 form a coiled coil. The interaction with AKAP9 stretch occupies residues Ile587–Leu615. Positions Gly588–Gln619 are C-terminal assembly domain (tetramerization).

This sequence belongs to the potassium channel family. KQT (TC 1.A.1.15) subfamily. Kv7.1/KCNQ1 sub-subfamily. In terms of assembly, tetramer. Heterotetramer with KCNE1; form the native cardiac channel I(Ks) which increases the amplitude and slows down the activation kinetics of outward potassium current and targets to the membrane raft. Interacts (via C-terminus) with CALM; forms a heterooctameric structure (with 4:4 KCNQ1:CALM stoichiometry) in a calcium-independent manner. Interacts with AKAP9; targets protein kinase A (PKA) catalytic and regulatory subunits and protein phosphatase 1 (PP1) to the KCNQ1-KCNE1 complex, allowing PKA-mediated phosphorylation and increase of delayed rectifier potassium channel activity. Interacts with KCNE2; form an heterooligomer complex that targets to the membrane raft and leading to currents with an apparently instantaneous activation, a rapid deactivation process and a linear current-voltage relationship and decreases the amplitude of the outward current. Interacts with AP2M1; mediates estrogen-induced internalization via clathrin-coated vesicles. Interacts with NEDD4L; promotes internalization and decreases I(Ks) currents. Interacts with USP2; counteracts the NEDD4L-specific down-regulation of I(Ks) and restore plasma membrane localization. Heterotetramer with KCNQ5; has a voltage-gated potassium channel activity. Interacts with KCNE3; four KCNE3 molecules are bound to one KCNQ1 tetramer (4:4 KCNQ1:KCNE3 stoichiometry); alters membrane raft localization; affects KCNQ1 structure and gating properties. Interacts with KCNE4; impairs KCNQ1 localization in lipid rafts and inhibits voltage-gated potassium channel activity. Interacts with KCNE5; impairs KCNQ1 localization in lipid rafts and only conducts current upon strong and continued depolarization. Interacts with SLC5A3; forms coregulatory channel-transporter complexes that modulate Na(+)-coupled myo-inositol influx through the transporter. In terms of processing, phosphorylation at Ser-27 by PKA; increases delayed rectifier potassium channel activity of the KCNQ1-KCNE1 complex through a macromolecular complex that includes PKA, PP1, and the targeting protein AKAP9. Post-translationally, ubiquitinated by NEDD4L; promotes internalization. The ubiquitinylated form is internalized through a clathrin-mediated endocytosis by interacting with AP2M1 and is recycled back to the cell membrane via RAB4A and RAB11A. Deubiquitinated by USP2; counteracts the NEDD4L-specific down-regulation of I(Ks) and restores the membrane localization. As to expression, expressed in heart, kidney and salivary glands. Detected in the cochlea. Almost undetectable in brain, skeletal muscle and liver. Widely expressed in embryonic and neonatal tissues. Expressed in choroid plexus epithelium (at protein level).

It localises to the cell membrane. The protein localises to the cytoplasmic vesicle membrane. It is found in the early endosome. The protein resides in the membrane raft. Its subcellular location is the endoplasmic reticulum. It localises to the basolateral cell membrane. The protein localises to the apical cell membrane. It carries out the reaction K(+)(in) = K(+)(out). Its activity is regulated as follows. PIP2 molecule is essential to activate KCNQ channels by inducing the coupling of the voltage-sensing domain (VSD) and the pore-forming domain (PD). Upon channel activation, PIP2 disrupts the VSD-calmodulin/CALM interactions, causing the release of CALM from the VSD which triggers the opening of the gate. Calcium potentiates KCNQ1 channel current through calcium-bound CALM. Calcium-bound CALM competes with PIP2 to stabilize the channel open state. Functionally, pore-forming subunit of the voltage-gated potassium (Kv) channel involved in the regulation of cardiomyocyte excitability and important in normal development and functions of myocardium, inner ear, stomach and colon. Associates with KCNE beta subunits that modulates current kinetics. Induces a voltage-dependent by rapidly activating and slowly deactivating potassium-selective outward current. Also promotes a delayed voltage activated potassium current showing outward rectification characteristic. During beta-adrenergic receptor stimulation participates in cardiac increases the amplitude and slows down the activation kinetics of outward potassium current I(Ks). Muscarinic agonist oxotremorine-M strongly suppresses KCNQ1/KCNE1 current. When associated with KCNE3, forms the potassium channel that is important for cyclic AMP-stimulated intestinal secretion of chloride ions. This interaction with KCNE3 is reduced by 17beta-estradiol, resulting in the reduction of currents. During conditions of increased substrate load, maintains the driving force for proximal tubular and intestinal sodium ions absorption, gastric acid secretion, and cAMP-induced jejunal chloride ions secretion. Allows the provision of potassium ions to the luminal membrane of the secretory canaliculus in the resting state as well as during stimulated acid secretion. When associated with KCNE2, forms a heterooligomer complex leading to currents with an apparently instantaneous activation, a rapid deactivation process and a linear current-voltage relationship and decreases the amplitude of the outward current. When associated with KCNE4, inhibits voltage-gated potassium channel activity. When associated with KCNE5, this complex only conducts current upon strong and continued depolarization. Also forms a heterotetramer with KCNQ5; has a voltage-gated potassium channel activity. Binds with phosphatidylinositol 4,5-bisphosphate. KCNQ1-KCNE2 channel associates with Na(+)-coupled myo-inositol symporter in the apical membrane of choroid plexus epithelium and regulates the myo-inositol gradient between blood and cerebrospinal fluid with an impact on neuron excitability. The protein is Potassium voltage-gated channel subfamily KQT member 1 of Mus musculus (Mouse).